The chain runs to 120 residues: MRIALIAHDNKKDELLHFIKRYEHVLATHTLCATNSTGRLIAENTNLMVHRYQSGPLGGDQQIGSEIATGNVDFVFFLRDPLTAQPHEPDITALLRICDVHNIPVATNFATAEILVESVL.

An MGS-like domain is found at 1–120 (MRIALIAHDN…TAEILVESVL (120 aa)). Substrate contacts are provided by residues His-8, Lys-12, and 54–55 (SG). Asp-60 (proton donor/acceptor) is an active-site residue. His-87 serves as a coordination point for substrate.

Belongs to the methylglyoxal synthase family.

The enzyme catalyses dihydroxyacetone phosphate = methylglyoxal + phosphate. Catalyzes the formation of methylglyoxal from dihydroxyacetone phosphate. The protein is Methylglyoxal synthase of Natranaerobius thermophilus (strain ATCC BAA-1301 / DSM 18059 / JW/NM-WN-LF).